The chain runs to 194 residues: Phosphoheptose isomerase (194 aa).

The 158-residue stretch at 37-194 (IAKSFKNKNK…IIEKEMKKIN (158 aa)) folds into the SIS domain. 52-54 (NGG) is a substrate binding site. Residues His-61 and Glu-65 each coordinate Zn(2+). Residues Glu-65, 93-94 (ND), 119-121 (STS), Ser-124, and Gln-172 contribute to the substrate site. Gln-172 and His-180 together coordinate Zn(2+).

This sequence belongs to the SIS family. GmhA subfamily. Homotetramer. The cofactor is Zn(2+).

Its subcellular location is the cytoplasm. It catalyses the reaction 2 D-sedoheptulose 7-phosphate = D-glycero-alpha-D-manno-heptose 7-phosphate + D-glycero-beta-D-manno-heptose 7-phosphate. It participates in carbohydrate biosynthesis; D-glycero-D-manno-heptose 7-phosphate biosynthesis; D-glycero-alpha-D-manno-heptose 7-phosphate and D-glycero-beta-D-manno-heptose 7-phosphate from sedoheptulose 7-phosphate: step 1/1. Functionally, catalyzes the isomerization of sedoheptulose 7-phosphate in D-glycero-D-manno-heptose 7-phosphate. The chain is Phosphoheptose isomerase from Buchnera aphidicola subsp. Schizaphis graminum (strain Sg).